The chain runs to 132 residues: MAEEGSPAGGVMDVNTALPEVLKTALIHDGLAPGIREAAKALDKRQAHLCVLAANCDEPMYVKLVEALCAEHQINLIKVDDNKKLGEWVGLCKIDREGKPRKVVGCSCVVVKDYGKESQAKDVIEEYFKSKK.

It belongs to the eukaryotic ribosomal protein eS12 family.

The chain is Small ribosomal subunit protein eS12 (rps12) from Oreochromis niloticus (Nile tilapia).